The chain runs to 387 residues: Mannitol-1-phosphate 5-dehydrogenase (387 aa).

3 to 14 (ALHFGAGNIGRG) contacts NAD(+).

The protein belongs to the mannitol dehydrogenase family.

The catalysed reaction is D-mannitol 1-phosphate + NAD(+) = beta-D-fructose 6-phosphate + NADH + H(+). This Yersinia pseudotuberculosis serotype IB (strain PB1/+) protein is Mannitol-1-phosphate 5-dehydrogenase.